We begin with the raw amino-acid sequence, 140 residues long: MKMFKSLRLLPHIVSPFQKCYSTDLISLVGVPRVKITKGQNRYLLVNIHTHGFTKYGRVIVRGADVDNHLAVFDSILEELEPEGICAKILGGGRILNEAENKKIKIYGTSRTFGGADHTRTRNILQAWTTYKDFKITVKQ.

Arg42 is a binding site for substrate. His69 acts as the Proton acceptor in catalysis. 110 to 112 lines the substrate pocket; sequence SRT.

The protein belongs to the janus family. As to expression, germline cells of adult males.

Its function is as follows. JanA and janB regulate somatic sex differentiation. The chain is Sex-regulated protein janus-B (janB) from Drosophila melanogaster (Fruit fly).